We begin with the raw amino-acid sequence, 210 residues long: Somatotropin-2 (210 aa).

Positions 1–22 (MGQVFLLMPVLLVSCFLGQGAA) are cleaved as a signal peptide. Residue H38 participates in Zn(2+) binding. C71 and C183 are joined by a disulfide. E192 is a binding site for Zn(2+). Cysteines 200 and 208 form a disulfide.

Belongs to the somatotropin/prolactin family.

The protein resides in the secreted. Functionally, growth hormone plays an important role in growth control and is involved in the regulation of several anabolic processes. Implicated as an osmoregulatory substance important for seawater adaptation. This is Somatotropin-2 (gh2) from Oncorhynchus mykiss (Rainbow trout).